Here is a 919-residue protein sequence, read N- to C-terminus: Transcriptional regulatory protein EDS1 (919 aa).

The segment at methionine 1–arginine 54 is disordered. Residues serine 23–arginine 36 are compositionally biased toward polar residues. Positions asparagine 37–threonine 46 are enriched in basic and acidic residues. A DNA-binding region (zn(2)-C6 fungal-type) is located at residues cysteine 56–cysteine 85. Residues alanine 297–serine 338 are disordered. The span at leucine 304 to serine 317 shows a compositional bias: basic and acidic residues. A compositionally biased stretch (polar residues) spans threonine 318 to serine 338.

As to quaternary structure, binds DNA in a sequence-specific manner.

Its subcellular location is the nucleus. The chain is Transcriptional regulatory protein EDS1 (EDS1) from Saccharomyces cerevisiae (strain RM11-1a) (Baker's yeast).